The following is a 655-amino-acid chain: Mannosyl-oligosaccharide 1,2-alpha-mannosidase IA (655 aa).

The Cytoplasmic portion of the chain corresponds to 1–43 (MPVGGLLPLFSSPGGGGLGSGLGGGLGGGRKGSGPAAFRLTEK). The helical; Signal-anchor for type II membrane protein transmembrane segment at 44–64 (FVLLLVFSAFITLCFGAIFFL) threads the bilayer. At 65-655 (PDSSKLLSGV…QKKEIDGKEK (591 aa)) the chain is on the lumenal side. Residues cysteine 478 and cysteine 510 are joined by a disulfide bond. N-linked (GlcNAc...) asparagine glycosylation is present at asparagine 515. Glutamate 524 acts as the Proton donor in catalysis. Position 635 (threonine 635) interacts with Ca(2+).

The protein belongs to the glycosyl hydrolase 47 family. The cofactor is Ca(2+). N-linked glycan at Asn-515 consists of Man(6)-GlcNAc(2).

The protein resides in the golgi apparatus membrane. The enzyme catalyses N(4)-(alpha-D-Man-(1-&gt;2)-alpha-D-Man-(1-&gt;2)-alpha-D-Man-(1-&gt;3)-[alpha-D-Man-(1-&gt;2)-alpha-D-Man-(1-&gt;3)-[alpha-D-Man-(1-&gt;2)-alpha-D-Man-(1-&gt;6)]-alpha-D-Man-(1-&gt;6)]-beta-D-Man-(1-&gt;4)-beta-D-GlcNAc-(1-&gt;4)-beta-D-GlcNAc)-L-asparaginyl-[protein] (N-glucan mannose isomer 9A1,2,3B1,2,3) + 4 H2O = N(4)-(alpha-D-Man-(1-&gt;3)-[alpha-D-Man-(1-&gt;3)-[alpha-D-Man-(1-&gt;6)]-alpha-D-Man-(1-&gt;6)]-beta-D-Man-(1-&gt;4)-beta-D-GlcNAc-(1-&gt;4)-beta-D-GlcNAc)-L-asparaginyl-[protein] (N-glucan mannose isomer 5A1,2) + 4 beta-D-mannose. The catalysed reaction is N(4)-(alpha-D-Man-(1-&gt;2)-alpha-D-Man-(1-&gt;2)-alpha-D-Man-(1-&gt;3)-[alpha-D-Man-(1-&gt;3)-[alpha-D-Man-(1-&gt;2)-alpha-D-Man-(1-&gt;6)]-alpha-D-Man-(1-&gt;6)]-beta-D-Man-(1-&gt;4)-beta-D-GlcNAc-(1-&gt;4)-beta-D-GlcNAc)-L-asparaginyl-[protein] (N-glucan mannose isomer 8A1,2,3B1,3) + 3 H2O = N(4)-(alpha-D-Man-(1-&gt;3)-[alpha-D-Man-(1-&gt;3)-[alpha-D-Man-(1-&gt;6)]-alpha-D-Man-(1-&gt;6)]-beta-D-Man-(1-&gt;4)-beta-D-GlcNAc-(1-&gt;4)-beta-D-GlcNAc)-L-asparaginyl-[protein] (N-glucan mannose isomer 5A1,2) + 3 beta-D-mannose. It participates in protein modification; protein glycosylation. Its activity is regulated as follows. Inhibited by both 1-deoxymannojirimycin and kifunensine. Its function is as follows. Involved in the maturation of Asn-linked oligosaccharides. Progressively trim alpha-1,2-linked mannose residues from Man(9)GlcNAc(2) to produce Man(5)GlcNAc(2). The polypeptide is Mannosyl-oligosaccharide 1,2-alpha-mannosidase IA (Man1a1) (Mus musculus (Mouse)).